The primary structure comprises 450 residues: tRNA-2-methylthio-N(6)-dimethylallyladenosine synthase (450 aa).

The 121-residue stretch at 7–127 folds into the MTTase N-terminal domain; sequence KKVFIKTYGC…LPDVLARVRG (121 aa). [4Fe-4S] cluster is bound by residues C16, C52, C90, C168, C172, and C175. Positions 154-388 constitute a Radical SAM core domain; that stretch reads IKRGVTAFLT…LLLKQQQGFG (235 aa). Residues 389-450 enclose the TRAM domain; the sequence is SSLVGSTIDT…GYNSLFAELA (62 aa).

The protein belongs to the methylthiotransferase family. MiaB subfamily. Monomer. It depends on [4Fe-4S] cluster as a cofactor.

It is found in the cytoplasm. It carries out the reaction N(6)-dimethylallyladenosine(37) in tRNA + (sulfur carrier)-SH + AH2 + 2 S-adenosyl-L-methionine = 2-methylsulfanyl-N(6)-dimethylallyladenosine(37) in tRNA + (sulfur carrier)-H + 5'-deoxyadenosine + L-methionine + A + S-adenosyl-L-homocysteine + 2 H(+). Its function is as follows. Catalyzes the methylthiolation of N6-(dimethylallyl)adenosine (i(6)A), leading to the formation of 2-methylthio-N6-(dimethylallyl)adenosine (ms(2)i(6)A) at position 37 in tRNAs that read codons beginning with uridine. This chain is tRNA-2-methylthio-N(6)-dimethylallyladenosine synthase, found in Mesorhizobium japonicum (strain LMG 29417 / CECT 9101 / MAFF 303099) (Mesorhizobium loti (strain MAFF 303099)).